A 241-amino-acid polypeptide reads, in one-letter code: MSYRIDFEGSSEIGAYMSLTNTYCVIGRSQSNNVLKFLQENVAIPIVETTINSIRSVGSQCRGNRHGLLVPHTITDQEIMHIRNSLPEDVVVRRIEERLNALGNVILCNDHIAIIHGDLDKESEDLIRDVLQVHVYRQNIGQEPLVGTFGALNNQGMLVHPFTSTECQKELSELLEVNVVAGTINGGSQCVGGGVVANDWMCIAGIKTTNVEMAVIEGVFDLTGDQDLEARRRAIVDAIVR.

Belongs to the eIF-6 family. Monomer. Associates with the 60S ribosomal subunit.

The protein localises to the cytoplasm. It is found in the nucleus. It localises to the nucleolus. Functionally, binds to the 60S ribosomal subunit and prevents its association with the 40S ribosomal subunit to form the 80S initiation complex in the cytoplasm. Is also involved in ribosome biogenesis. Associates with pre-60S subunits in the nucleus and is involved in its nuclear export. The chain is Eukaryotic translation initiation factor 6 from Encephalitozoon cuniculi (strain GB-M1) (Microsporidian parasite).